Reading from the N-terminus, the 300-residue chain is ADP-polyphosphate phosphotransferase 1 (300 aa).

This sequence belongs to the polyphosphate kinase 2 (PPK2) family. Class I subfamily. In terms of assembly, homotetramer. The cofactor is Mg(2+).

The catalysed reaction is [phosphate](n) + ATP = [phosphate](n+1) + ADP. It catalyses the reaction [phosphate](n) + GTP = [phosphate](n+1) + GDP. Functionally, uses inorganic polyphosphate (polyP) as a donor to convert ADP to ATP. Can also convert GDP to GTP, with lower efficiency. Cannot dephosphorylate ATP in the presence of polyP. The sequence is that of ADP-polyphosphate phosphotransferase 1 from Rhizobium meliloti (strain 1021) (Ensifer meliloti).